The chain runs to 308 residues: uncharacterized protein (308 aa).

Residues 1-17 (MKSLALLLSLLINFSIG) form the signal peptide. N-linked (GlcNAc...) asparagine glycosylation is found at asparagine 13, asparagine 91, asparagine 159, and asparagine 210. The tract at residues 213–308 (DEISGGTGAG…HDNYISSFCT (96 aa)) is disordered. Gly residues-rich tracts occupy residues 217-231 (GGTGAGDYSGTGSGS) and 239-252 (SDGGSSGSGSGSGS). Residues 267–284 (NKNNNKNKNNNNNNNNYN) are compositionally biased toward low complexity.

The protein localises to the secreted. This is an uncharacterized protein from Dictyostelium discoideum (Social amoeba).